A 254-amino-acid chain; its full sequence is MKIGVYGASGRIGKLLLEELKGGYKGLVLSSVFVRQKCEIDFSSFSHKPLVTNDLKAFVRACECVIDFSLPKGVDSLLDTLLECPKILVSGTTGLEEKTLEKMQNLALKTPLLHAHNMSIGIAILNQLAFLASLKLKDADIEIVETHHNLKKDAPSGTALSLYQTCAKARGYDEKNALTTHREGLRSKESIGVAALRGGDVAGKHTIGFYLEGEYIELSHTATNRSIFAKGALEVALWLKDKAAKKYEINEIFD.

An NAD(+)-binding site is contributed by 7 to 12; sequence GASGRI. Arg35 lines the NADP(+) pocket. NAD(+)-binding positions include 91–93 and 115–118; these read GTT and AHNM. The Proton donor/acceptor role is filled by His147. His148 is a binding site for (S)-2,3,4,5-tetrahydrodipicolinate. Lys151 serves as the catalytic Proton donor. (S)-2,3,4,5-tetrahydrodipicolinate is bound at residue 157–158; the sequence is GT.

The protein belongs to the DapB family.

It localises to the cytoplasm. It carries out the reaction (S)-2,3,4,5-tetrahydrodipicolinate + NAD(+) + H2O = (2S,4S)-4-hydroxy-2,3,4,5-tetrahydrodipicolinate + NADH + H(+). The enzyme catalyses (S)-2,3,4,5-tetrahydrodipicolinate + NADP(+) + H2O = (2S,4S)-4-hydroxy-2,3,4,5-tetrahydrodipicolinate + NADPH + H(+). The protein operates within amino-acid biosynthesis; L-lysine biosynthesis via DAP pathway; (S)-tetrahydrodipicolinate from L-aspartate: step 4/4. Functionally, catalyzes the conversion of 4-hydroxy-tetrahydrodipicolinate (HTPA) to tetrahydrodipicolinate. In Helicobacter acinonychis (strain Sheeba), this protein is 4-hydroxy-tetrahydrodipicolinate reductase.